Here is a 181-residue protein sequence, read N- to C-terminus: ATP-dependent protease subunit ClpQ (181 aa).

Ser2 is an active-site residue. Residues Gly165, Cys168, and Thr171 each coordinate Na(+).

This sequence belongs to the peptidase T1B family. HslV subfamily. A double ring-shaped homohexamer of ClpQ is capped on each side by a ring-shaped ClpY homohexamer. The assembly of the ClpQ/ClpY complex is dependent on binding of ATP.

The protein localises to the cytoplasm. Its function is as follows. Protease subunit of a proteasome-like degradation complex. In Bacillus velezensis (strain DSM 23117 / BGSC 10A6 / LMG 26770 / FZB42) (Bacillus amyloliquefaciens subsp. plantarum), this protein is ATP-dependent protease subunit ClpQ (clpQ).